Consider the following 365-residue polypeptide: Cyclin-O protein B (365 aa).

The segment at 22-64 (SGKRKRDSVYSPGDATPGDRGEGEPKCPSVGTKKRAKYSRHRK) is disordered. Over residues 53–64 (TKKRAKYSRHRK) the composition is skewed to basic residues.

Belongs to the cyclin family.

It localises to the cytoplasm. Functionally, specifically required for generation of multiciliated cells, possibly by promoting a cell cycle state compatible with centriole amplification and maturation. Acts downstream of mcidas to promote mother centriole amplification and maturation in preparation for apical docking. This Xenopus laevis (African clawed frog) protein is Cyclin-O protein B (ccno-b).